Consider the following 310-residue polypeptide: 4-hydroxythreonine-4-phosphate dehydrogenase (310 aa).

Residue Thr129 coordinates substrate. Positions 158, 202, and 250 each coordinate a divalent metal cation. Substrate contacts are provided by Lys258, Asn267, and Arg276.

The protein belongs to the PdxA family. Homodimer. A divalent metal cation serves as cofactor.

It localises to the cytoplasm. The enzyme catalyses 4-(phosphooxy)-L-threonine + NAD(+) = 3-amino-2-oxopropyl phosphate + CO2 + NADH. Its pathway is cofactor biosynthesis; pyridoxine 5'-phosphate biosynthesis; pyridoxine 5'-phosphate from D-erythrose 4-phosphate: step 4/5. Functionally, catalyzes the NAD(P)-dependent oxidation of 4-(phosphooxy)-L-threonine (HTP) into 2-amino-3-oxo-4-(phosphooxy)butyric acid which spontaneously decarboxylates to form 3-amino-2-oxopropyl phosphate (AHAP). The chain is 4-hydroxythreonine-4-phosphate dehydrogenase from Hydrogenobaculum sp. (strain Y04AAS1).